The chain runs to 479 residues: Siroheme synthase (479 aa).

Residues 1–202 (MNYLPIFLDL…GRDSEAEAQL (202 aa)) are precorrin-2 dehydrogenase /sirohydrochlorin ferrochelatase. NAD(+) contacts are provided by residues 22-23 (ET) and 43-44 (PA). Position 128 is a phosphoserine (Ser-128). The interval 217-479 (GEVYLVGAGP…TPLEAPDHLA (263 aa)) is uroporphyrinogen-III C-methyltransferase. Pro-226 provides a ligand contact to S-adenosyl-L-methionine. Asp-249 functions as the Proton acceptor in the catalytic mechanism. Residue Lys-271 is the Proton donor of the active site. S-adenosyl-L-methionine contacts are provided by residues 302–304 (GGD), Ile-307, 332–333 (TA), Met-384, and Gly-413.

It in the N-terminal section; belongs to the precorrin-2 dehydrogenase / sirohydrochlorin ferrochelatase family. In the C-terminal section; belongs to the precorrin methyltransferase family.

It catalyses the reaction uroporphyrinogen III + 2 S-adenosyl-L-methionine = precorrin-2 + 2 S-adenosyl-L-homocysteine + H(+). The catalysed reaction is precorrin-2 + NAD(+) = sirohydrochlorin + NADH + 2 H(+). The enzyme catalyses siroheme + 2 H(+) = sirohydrochlorin + Fe(2+). It functions in the pathway cofactor biosynthesis; adenosylcobalamin biosynthesis; precorrin-2 from uroporphyrinogen III: step 1/1. The protein operates within cofactor biosynthesis; adenosylcobalamin biosynthesis; sirohydrochlorin from precorrin-2: step 1/1. Its pathway is porphyrin-containing compound metabolism; siroheme biosynthesis; precorrin-2 from uroporphyrinogen III: step 1/1. It participates in porphyrin-containing compound metabolism; siroheme biosynthesis; siroheme from sirohydrochlorin: step 1/1. It functions in the pathway porphyrin-containing compound metabolism; siroheme biosynthesis; sirohydrochlorin from precorrin-2: step 1/1. Its function is as follows. Multifunctional enzyme that catalyzes the SAM-dependent methylations of uroporphyrinogen III at position C-2 and C-7 to form precorrin-2 via precorrin-1. Then it catalyzes the NAD-dependent ring dehydrogenation of precorrin-2 to yield sirohydrochlorin. Finally, it catalyzes the ferrochelation of sirohydrochlorin to yield siroheme. The polypeptide is Siroheme synthase (Thiobacillus denitrificans (strain ATCC 25259 / T1)).